A 113-amino-acid chain; its full sequence is U11-theraphotoxin-Hhn1e (113 aa).

The N-terminal stretch at 1–21 (MNTVRVTFLLVFVLAVSLGQA) is a signal peptide. Positions 22–74 (DKDENRMEMLEKTEQGKSYLDFAENLLLQKLEELEARLLEEDSEESRNSRQKR) are excised as a propeptide. Basic and acidic residues predominate over residues 60 to 69 (LEEDSEESRN). The disordered stretch occupies residues 60–87 (LEEDSEESRNSRQKRCIGEGVPRDENDP). 2 disulfides stabilise this stretch: cysteine 75–cysteine 90 and cysteine 89–cysteine 110.

It belongs to the neurotoxin 14 (magi-1) family. 01 (HNTX-16) subfamily. Expressed by the venom gland.

The protein resides in the secreted. Probable ion channel inhibitor. The chain is U11-theraphotoxin-Hhn1e from Cyriopagopus hainanus (Chinese bird spider).